Here is a 386-residue protein sequence, read N- to C-terminus: MNDQPETGITPGGTSGAFRDVLSKDHARRGKPPLHFADMSEEERIGKAKELGLPKFRVKQLANHYYGHFDVNAEEFSDFPAARRSDAAEAFFPELIHEVTRQVADGGTTIKTLWRLFDGSLIESVLMRYPTRTTLCISSQVGCGMGCPFCATGQLGLTRNMSAGEIVEQVRVAAKAMRDGEVAGGSGRLSNIVFMGMGEPMGNYKSVLSAVRQISSMPPEGFGISARNITVSTVGVVPGIRKLAEEGIPVRLAVSLHAPSDELRDELVPMNKRFNTKQVLDAAHDYYLASKRRVSIEYALMRGINDQAEHAKLLAKRLNHYGDDWAHVNPIPLNPIEGSKWTASKPEDERRFLEILHNAGITATLRDTRGQDIDGACGQLAAKERD.

Residue Glu123 is the Proton acceptor of the active site. One can recognise a Radical SAM core domain in the interval 129-372 (YPTRTTLCIS…ATLRDTRGQD (244 aa)). A disulfide bond links Cys136 and Cys377. Cys143, Cys147, and Cys150 together coordinate [4Fe-4S] cluster. S-adenosyl-L-methionine is bound by residues 198-199 (GE), Ser232, 255-257 (SLH), and Asn334. Cys377 acts as the S-methylcysteine intermediate in catalysis.

Belongs to the radical SAM superfamily. RlmN family. Requires [4Fe-4S] cluster as cofactor.

The protein localises to the cytoplasm. The catalysed reaction is adenosine(2503) in 23S rRNA + 2 reduced [2Fe-2S]-[ferredoxin] + 2 S-adenosyl-L-methionine = 2-methyladenosine(2503) in 23S rRNA + 5'-deoxyadenosine + L-methionine + 2 oxidized [2Fe-2S]-[ferredoxin] + S-adenosyl-L-homocysteine. It carries out the reaction adenosine(37) in tRNA + 2 reduced [2Fe-2S]-[ferredoxin] + 2 S-adenosyl-L-methionine = 2-methyladenosine(37) in tRNA + 5'-deoxyadenosine + L-methionine + 2 oxidized [2Fe-2S]-[ferredoxin] + S-adenosyl-L-homocysteine. Its function is as follows. Specifically methylates position 2 of adenine 2503 in 23S rRNA and position 2 of adenine 37 in tRNAs. This Bifidobacterium adolescentis (strain ATCC 15703 / DSM 20083 / NCTC 11814 / E194a) protein is Probable dual-specificity RNA methyltransferase RlmN.